Consider the following 231-residue polypeptide: Large ribosomal subunit protein uL1 (231 aa).

It belongs to the universal ribosomal protein uL1 family. Part of the 50S ribosomal subunit.

Functionally, binds directly to 23S rRNA. The L1 stalk is quite mobile in the ribosome, and is involved in E site tRNA release. Protein L1 is also a translational repressor protein, it controls the translation of the L11 operon by binding to its mRNA. In Pseudomonas syringae pv. tomato (strain ATCC BAA-871 / DC3000), this protein is Large ribosomal subunit protein uL1.